Here is a 679-residue protein sequence, read N- to C-terminus: UvrABC system protein B (679 aa).

Residues 25-176 (KGVNTGKEFQ…NLRSYLRSLV (152 aa)) enclose the Helicase ATP-binding domain. An ATP-binding site is contributed by 38-45 (GATGTGKT). A Beta-hairpin motif is present at residues 91–114 (YYDYYQPEAYVPVSDTYIAKTASI). The Helicase C-terminal domain maps to 429 to 583 (QIEDLLSEIR…KKYNQVNGIT (155 aa)). In terms of domain architecture, UVR spans 639 to 674 (PDLIEKLEIKMKDAAKELNFEEAANLRDRIKKLRQK).

It belongs to the UvrB family. Forms a heterotetramer with UvrA during the search for lesions. Interacts with UvrC in an incision complex.

It localises to the cytoplasm. Its function is as follows. The UvrABC repair system catalyzes the recognition and processing of DNA lesions. A damage recognition complex composed of 2 UvrA and 2 UvrB subunits scans DNA for abnormalities. Upon binding of the UvrA(2)B(2) complex to a putative damaged site, the DNA wraps around one UvrB monomer. DNA wrap is dependent on ATP binding by UvrB and probably causes local melting of the DNA helix, facilitating insertion of UvrB beta-hairpin between the DNA strands. Then UvrB probes one DNA strand for the presence of a lesion. If a lesion is found the UvrA subunits dissociate and the UvrB-DNA preincision complex is formed. This complex is subsequently bound by UvrC and the second UvrB is released. If no lesion is found, the DNA wraps around the other UvrB subunit that will check the other stand for damage. The polypeptide is UvrABC system protein B (Prochlorococcus marinus (strain MIT 9301)).